A 928-amino-acid polypeptide reads, in one-letter code: Nitrogen network kinase 1 (928 aa).

A compositionally biased stretch (polar residues) spans 1–12 (MFTSQRQLRQNG). Disordered stretches follow at residues 1–43 (MFTS…SYGR) and 81–118 (HEHPSRSTLVQLQTRSQPDDVASSQVNPEGGTDDLELG). The span at 13 to 29 (SPMSSSRSSQHSSGTAS) shows a compositional bias: low complexity. Polar residues-rich tracts occupy residues 30-40 (PISDSPASNRS) and 86-107 (RSTLVQLQTRSQPDDVASSQVN). Residues Ser178 and Ser179 each carry the phosphoserine modification. Residues 374 to 394 (ANDDNINSRNTPNNSNDTYVN) are disordered. Over residues 375 to 391 (NDDNINSRNTPNNSNDT) the composition is skewed to low complexity. Phosphoserine is present on residues Ser405 and Ser426. The Protein kinase domain occupies 449–912 (HRLGKIIGFG…WKLKRIEEVL (464 aa)). ATP is bound by residues 455 to 463 (IGFGAWGII) and Lys478. Asp580 serves as the catalytic Proton acceptor. Disordered stretches follow at residues 670-741 (ENRK…KYIG) and 767-813 (YDSP…SGSS). The span at 683-696 (VSSSSHSLKHLNQP) shows a compositional bias: polar residues. The residue at position 737 (Ser737) is a Phosphoserine. Tyr739 bears the Phosphotyrosine mark. Residues 769–813 (SPDSSQSEISAASSSSSNLSSLSSSTKASAVTNSGVTTSSPSGSS) show a composition bias toward low complexity.

It belongs to the protein kinase superfamily. Ser/Thr protein kinase family. As to quaternary structure, interacts with URE2 and GDH2. Also interacts with the TORC1 kinase complex.

It is found in the cytoplasm. It carries out the reaction L-seryl-[protein] + ATP = O-phospho-L-seryl-[protein] + ADP + H(+). The catalysed reaction is L-threonyl-[protein] + ATP = O-phospho-L-threonyl-[protein] + ADP + H(+). Its function is as follows. Serine/threonine-protein kinase involved in the phosphorylation of the NAD(+)-dependent glutamate dehydrogenase GDH2. When overexpressed, confers hypersensitivity to rapamycin and induces rapid nuclear accumulation of GLN3 to activate the transcription of nitrogen-regulated genes. In Saccharomyces cerevisiae (strain ATCC 204508 / S288c) (Baker's yeast), this protein is Nitrogen network kinase 1 (NNK1).